Here is a 530-residue protein sequence, read N- to C-terminus: UDP-glucuronosyltransferase 1A8 (530 aa).

A signal peptide spans 1–25 (MAPSGCPPSLPLCVCLFLASGFAQA). N-linked (GlcNAc...) asparagine glycosylation is found at asparagine 71, asparagine 292, and asparagine 430. Residues 488 to 504 (VIGFLLAIVLTVVFIVY) form a helical membrane-spanning segment.

This sequence belongs to the UDP-glycosyltransferase family. In terms of assembly, homodimers. Homooligomer. Interacts with UGT1A1, UGT1A3, UGT1A4, UGT1A6, UGT1A7, UGT1A8, UGT1A9 and UGT1A10 to form heterodimers.

It localises to the endoplasmic reticulum membrane. It carries out the reaction glucuronate acceptor + UDP-alpha-D-glucuronate = acceptor beta-D-glucuronoside + UDP + H(+). It catalyses the reaction 17beta-estradiol + UDP-alpha-D-glucuronate = 17beta-estradiol 3-O-(beta-D-glucuronate) + UDP + H(+). The catalysed reaction is 17alpha-estradiol + UDP-alpha-D-glucuronate = 17alpha-estradiol 3-O-(beta-D-glucuronate) + UDP + H(+). The enzyme catalyses estrone + UDP-alpha-D-glucuronate = estrone 3-O-(beta-D-glucuronate) + UDP + H(+). It carries out the reaction 16alpha,17alpha-estriol + UDP-alpha-D-glucuronate = 16alpha,17alpha-estriol 3-O-(beta-D-glucuronate) + UDP + H(+). It catalyses the reaction 2-hydroxy-17beta-estradiol + UDP-alpha-D-glucuronate = 2-hydroxy-17beta-estradiol 3-O-(beta-D-glucuronate) + UDP + H(+). The catalysed reaction is 2-hydroxy-17beta-estradiol + UDP-alpha-D-glucuronate = 17beta-estradiol 2-O-(beta-D-glucuronate) + UDP + H(+). The enzyme catalyses 2-hydroxyestrone + UDP-alpha-D-glucuronate = 2-hydroxyestrone 3-O-(beta-D-glucuronate) + UDP + H(+). It carries out the reaction 4-hydroxy-17beta-estradiol + UDP-alpha-D-glucuronate = 4-hydroxy-17beta-estradiol 3-O-(beta-D-glucuronate) + UDP + H(+). It catalyses the reaction 4-hydroxy-17beta-estradiol + UDP-alpha-D-glucuronate = 17beta-estradiol 4-O-(beta-D-glucuronate) + UDP + H(+). The catalysed reaction is 4-hydroxyestrone + UDP-alpha-D-glucuronate = 4-hydroxyestrone 3-O-(beta-D-glucuronate) + UDP + H(+). The enzyme catalyses 4-hydroxyestrone + UDP-alpha-D-glucuronate = estrone 4-O-(beta-D-glucuronate) + UDP + H(+). It carries out the reaction 2-methoxy-17beta-estradiol + UDP-alpha-D-glucuronate = 2-methoxy-17beta-estradiol 3-O-(beta-D-glucuronate) + UDP + H(+). It catalyses the reaction 2-methoxyestrone + UDP-alpha-D-glucuronate = 2-methoxyestrone 3-O-(beta-D-glucuronate) + UDP + H(+). The catalysed reaction is 4-methoxy-17beta-estradiol + UDP-alpha-D-glucuronate = 4-methoxy-17beta-estradiol 3-O-(beta-D-glucuronate) + UDP + H(+). The enzyme catalyses 4-methoxyestrone + UDP-alpha-D-glucuronate = 4-methoxyestrone 3-O-(beta-D-glucuronate) + UDP + H(+). It carries out the reaction 17beta-hydroxy-5alpha-androstan-3-one + UDP-alpha-D-glucuronate = 5alpha-dihydrotestosterone 17-O-(beta-D-glucuronate) + UDP + H(+). It catalyses the reaction 5alpha-dihydrotestosterone 17-O-(beta-D-glucuronate) + UDP-alpha-D-glucuronate = 5alpha-dihydrotestosterone 17-O-[beta-D-glucuronosyl-(1-&gt;2)-glucuronate] + UDP + H(+). The catalysed reaction is prunetin + UDP-alpha-D-glucuronate = prunetin-4'-O-beta-D-glucuronide + UDP. The enzyme catalyses prunetin + UDP-alpha-D-glucuronate = prunetin-5-O-beta-D-glucuronide + UDP. It carries out the reaction (E)-ferulate + UDP-alpha-D-glucuronate = (E)-4-O-(beta-D-glucuronosyl)-ferulate + UDP + H(+). It catalyses the reaction (E)-ferulate + UDP-alpha-D-glucuronate = (E)-ferulic acid beta-D-glucuronate ester + UDP. The catalysed reaction is candesartan + UDP-alpha-D-glucuronate = candesartan O-beta-D-glucuronoside + UDP. The enzyme catalyses mycophenolate + UDP-alpha-D-glucuronate = mycophenolate 7-O-beta-D-glucuronide + UDP + H(+). UDP-glucuronosyltransferase (UGT) that catalyzes phase II biotransformation reactions in which lipophilic substrates are conjugated with glucuronic acid to increase the metabolite's water solubility, thereby facilitating excretion into either the urine or bile. Essential for the elimination and detoxification of drugs, xenobiotics and endogenous compounds. Catalyzes the glucuronidation of endogenous steroid hormones such as androgens and estrogens. Produces dihydrotestosterone (DHT) diglucuronide from the DHT after two subsequent glucoronidation steps. Involved in the glucuronidation of the phytochemical ferulic acid at the phenolic or the carboxylic acid group. Also catalyzes the glucuronidation of the isoflavones genistein, daidzein, glycitein, formononetin, biochanin A and prunetin, which are phytoestrogens with anticancer and cardiovascular properties. Involved in the glucuronidation of the AGTR1 angiotensin receptor antagonist caderastan, a drug which can inhibit the effect of angiotensin II. Also metabolizes mycophenolate, an immunosuppressive agent. The chain is UDP-glucuronosyltransferase 1A8 from Rattus norvegicus (Rat).